Here is an 83-residue protein sequence, read N- to C-terminus: Small ribosomal subunit protein bS16 (83 aa).

The protein belongs to the bacterial ribosomal protein bS16 family.

The protein is Small ribosomal subunit protein bS16 of Ectopseudomonas mendocina (strain ymp) (Pseudomonas mendocina).